Here is an 83-residue protein sequence, read N- to C-terminus: Small ribosomal subunit protein uS17 (83 aa).

It belongs to the universal ribosomal protein uS17 family. In terms of assembly, part of the 30S ribosomal subunit.

Its function is as follows. One of the primary rRNA binding proteins, it binds specifically to the 5'-end of 16S ribosomal RNA. This chain is Small ribosomal subunit protein uS17, found in Francisella philomiragia subsp. philomiragia (strain ATCC 25017 / CCUG 19701 / FSC 153 / O#319-036).